A 312-amino-acid chain; its full sequence is Ribosomal protein L11 methyltransferase (312 aa).

S-adenosyl-L-methionine-binding residues include Thr-160, Gly-181, Asp-203, and Asn-246.

It belongs to the methyltransferase superfamily. PrmA family.

Its subcellular location is the cytoplasm. It catalyses the reaction L-lysyl-[protein] + 3 S-adenosyl-L-methionine = N(6),N(6),N(6)-trimethyl-L-lysyl-[protein] + 3 S-adenosyl-L-homocysteine + 3 H(+). Functionally, methylates ribosomal protein L11. This Staphylococcus aureus (strain USA300) protein is Ribosomal protein L11 methyltransferase.